The primary structure comprises 312 residues: Malate dehydrogenase (312 aa).

NAD(+) is bound by residues 7–13 (GAAGGIG) and D34. The substrate site is built by R81 and R87. Residues N94 and 117 to 119 (ITN) contribute to the NAD(+) site. 2 residues coordinate substrate: N119 and R153. H177 (proton acceptor) is an active-site residue. An NAD(+)-binding site is contributed by M227.

This sequence belongs to the LDH/MDH superfamily. MDH type 1 family. As to quaternary structure, homodimer.

The enzyme catalyses (S)-malate + NAD(+) = oxaloacetate + NADH + H(+). Catalyzes the reversible oxidation of malate to oxaloacetate. This Shigella dysenteriae serotype 1 (strain Sd197) protein is Malate dehydrogenase.